The following is a 1528-amino-acid chain: Rho GTPase-activating protein 7 (1528 aa).

Disordered stretches follow at residues 72-94 (DFPG…HEGE), 288-310 (MSAE…PPKV), and 372-436 (ALST…TKPK). Over residues 81–94 (LSKDVDENDSHEGE) the composition is skewed to basic and acidic residues. The span at 374–384 (STSSSPSGTPT) shows a compositional bias: low complexity. The span at 396-436 (GSESGADTISVNQTRVNLSSDTESTDLPSSTPVANSGTKPK) shows a compositional bias: polar residues. The region spanning 448–515 (KAEIEAKEAC…LNKCAVMKLE (68 aa)) is the SAM domain. Residues serine 523, serine 526, and serine 566 each carry the phosphoserine modification. Disordered regions lie at residues 558–617 (PKQD…ATPR), 732–764 (RSVS…RTRS), 829–876 (PSGN…SSRL), and 928–990 (SDEG…GVGA). Composition is skewed to low complexity over residues 591–605 (VSSV…SLPS) and 734–760 (VSNS…SPVT). Positions 710–884 (QLNCVEISAL…RLSIYDNVPG (175 aa)) are focal adhesion-targeting (FAT). The residue at position 757 (serine 757) is a Phosphoserine. Positions 851-862 (LRRENSSDSPKE) are enriched in basic and acidic residues. The segment covering 936 to 948 (ALDSVSPCPSSPK) has biased composition (polar residues). Residues 950 to 960 (IHLDVDNDRTT) show a composition bias toward basic and acidic residues. Over residues 961–972 (PSDLDSTGNSLN) the composition is skewed to polar residues. A polybasic cluster (PBR) region spans residues 1051 to 1073 (KHGFSWAVPKFMKRIKVPDYKDR). Residues 1078 to 1284 (VPLTVNVQRT…HMIAECKKLF (207 aa)) form the Rho-GAP domain. In terms of domain architecture, START spans 1314 to 1521 (GNDDSADYQH…RDSFSNQNTE (208 aa)).

Interacts with EF1A1, facilitates EF1A1 distribution to the membrane periphery and ruffles upon growth factor stimulation and suppresses cell migration. Interacts with tensin TNS1 (via N-terminus); the interaction is decreased by phosphorylation of TNS1. Interacts with TNS3 and PTEN; in resting cells, interacts with TNS3 (via C2 tensin-type domain) but, following growth factor stimulation, TNS3 and PTEN are phosphorylated which leads to weakened interaction with TNS3 and enhanced interaction with PTEN. Interacts (via C-terminus) with tensin TNS4 (via SH2 domain); the interaction is independent of tyrosine phosphorylation of DLC1. As to expression, highest level of expression in the spleen, with rather lower levels in prostate, testis, ovary, small intestine and colon, but none in the thymus.

It localises to the cytoplasm. The protein localises to the cell junction. The protein resides in the focal adhesion. Its subcellular location is the membrane. Functionally, functions as a GTPase-activating protein for the small GTPases RHOA, RHOB, RHOC and CDC42, terminating their downstream signaling. This induces morphological changes and detachment through cytoskeletal reorganization, playing a critical role in biological processes such as cell migration and proliferation. Also functions in vivo as an activator of the phospholipase PLCD1. Active DLC1 increases cell migration velocity but reduces directionality. Required for growth factor-induced epithelial cell migration; in resting cells, interacts with TNS3 while PTEN interacts with the p85 regulatory subunit of the PI3K kinase complex but growth factor stimulation induces phosphorylation of TNS3 and PTEN, causing them to change their binding preference so that PTEN interacts with DLC1 and TNS3 interacts with p85. The PTEN-DLC1 complex translocates to the posterior of migrating cells to activate RHOA while the TNS3-p85 complex translocates to the leading edge of migrating cells to promote RAC1 activation. In Homo sapiens (Human), this protein is Rho GTPase-activating protein 7 (DLC1).